The sequence spans 160 residues: Small ribosomal subunit protein uS7 (160 aa).

Belongs to the universal ribosomal protein uS7 family. In terms of assembly, part of the 30S ribosomal subunit. Contacts proteins S9 and S11.

Its function is as follows. One of the primary rRNA binding proteins, it binds directly to 16S rRNA where it nucleates assembly of the head domain of the 30S subunit. Is located at the subunit interface close to the decoding center, probably blocks exit of the E-site tRNA. This Rickettsia typhi (strain ATCC VR-144 / Wilmington) protein is Small ribosomal subunit protein uS7.